The chain runs to 207 residues: Large ribosomal subunit protein uL4 (207 aa).

Residues 48–89 (SHKVKNRSEVRGGGRKPWRQKGTGRARQGSIRSPQWRGGGVV) form a disordered region. Residues 60 to 71 (GGRKPWRQKGTG) are compositionally biased toward basic residues.

The protein belongs to the universal ribosomal protein uL4 family. Part of the 50S ribosomal subunit.

In terms of biological role, one of the primary rRNA binding proteins, this protein initially binds near the 5'-end of the 23S rRNA. It is important during the early stages of 50S assembly. It makes multiple contacts with different domains of the 23S rRNA in the assembled 50S subunit and ribosome. Its function is as follows. Forms part of the polypeptide exit tunnel. The sequence is that of Large ribosomal subunit protein uL4 from Bacillus velezensis (strain DSM 23117 / BGSC 10A6 / LMG 26770 / FZB42) (Bacillus amyloliquefaciens subsp. plantarum).